The sequence spans 454 residues: Kynurenine--oxoglutarate transaminase 3 (454 aa).

Gly71 contributes to the substrate binding site. N6-acetyllysine; alternate is present on Lys116. Lys116 carries the post-translational modification N6-succinyllysine; alternate. A substrate-binding site is contributed by Asn218. The residue at position 280 (Lys280) is an N6-(pyridoxal phosphate)lysine. Arg429 contacts substrate.

This sequence belongs to the class-I pyridoxal-phosphate-dependent aminotransferase family. As to quaternary structure, homodimer. Requires pyridoxal 5'-phosphate as cofactor.

It catalyses the reaction L-kynurenine + 2-oxoglutarate = kynurenate + L-glutamate + H2O. It carries out the reaction L-kynurenine + glyoxylate = kynurenate + glycine + H2O. The catalysed reaction is 3-hydroxy-L-kynurenine + glyoxylate = xanthurenate + glycine + H2O. The enzyme catalyses an S-substituted L-cysteine + H2O = a thiol + pyruvate + NH4(+). The protein operates within amino-acid degradation; L-kynurenine degradation; kynurenate from L-kynurenine: step 1/2. Its function is as follows. Catalyzes the irreversible transamination of the L-tryptophan metabolite L-kynurenine to form kynurenic acid (KA), an intermediate in the tryptophan catabolic pathway which is also a broad spectrum antagonist of the three ionotropic excitatory amino acid receptors among others. May catalyze the beta-elimination of S-conjugates and Se-conjugates of L-(seleno)cysteine, resulting in the cleavage of the C-S or C-Se bond. Has transaminase activity towards L-kynurenine, tryptophan, phenylalanine, serine, cysteine, methionine, histidine, glutamine and asparagine with glyoxylate as an amino group acceptor (in vitro). Has lower activity with 2-oxoglutarate as amino group acceptor (in vitro). In Rattus norvegicus (Rat), this protein is Kynurenine--oxoglutarate transaminase 3.